The following is a 1228-amino-acid chain: DNA-directed RNA polymerase subunit beta (1228 aa).

This sequence belongs to the RNA polymerase beta chain family. As to quaternary structure, the RNAP catalytic core consists of 2 alpha, 1 beta, 1 beta' and 1 omega subunit. When a sigma factor is associated with the core the holoenzyme is formed, which can initiate transcription.

It catalyses the reaction RNA(n) + a ribonucleoside 5'-triphosphate = RNA(n+1) + diphosphate. Its function is as follows. DNA-dependent RNA polymerase catalyzes the transcription of DNA into RNA using the four ribonucleoside triphosphates as substrates. The polypeptide is DNA-directed RNA polymerase subunit beta (Leptospira biflexa serovar Patoc (strain Patoc 1 / Ames)).